Consider the following 124-residue polypeptide: ATP synthase epsilon chain (124 aa).

Belongs to the ATPase epsilon chain family. F-type ATPases have 2 components, CF(1) - the catalytic core - and CF(0) - the membrane proton channel. CF(1) has five subunits: alpha(3), beta(3), gamma(1), delta(1), epsilon(1). CF(0) has three main subunits: a, b and c.

Its subcellular location is the cell membrane. In terms of biological role, produces ATP from ADP in the presence of a proton gradient across the membrane. In Streptomyces griseus subsp. griseus (strain JCM 4626 / CBS 651.72 / NBRC 13350 / KCC S-0626 / ISP 5235), this protein is ATP synthase epsilon chain.